A 733-amino-acid polypeptide reads, in one-letter code: FYVE, RhoGEF and PH domain-containing protein 3 (733 aa).

Polar residues-rich tracts occupy residues M1–Q11, H47–E60, and E106–N117. The disordered stretch occupies residues M1 to V134. The span at P118–E129 shows a compositional bias: acidic residues. Residue S124 is modified to Phosphoserine. In terms of domain architecture, DH spans K153–A337. The 100-residue stretch at E366–E465 folds into the PH 1 domain. The segment at C481–K535 is disordered. The span at E517 to G533 shows a compositional bias: basic and acidic residues. The segment at D528–P584 adopts an FYVE-type zinc-finger fold. C534, C537, C551, C554, C559, C562, C576, and C579 together coordinate Zn(2+). Disordered regions lie at residues V586–P612 and G712–P733. Residues P612–H711 enclose the PH 2 domain. T732 is subject to Phosphothreonine.

Detected in adult brain, spleen, lung and skeletal muscle. Detected in embryos from 7 dpc to 17 dpc.

The protein localises to the cytoplasm. It is found in the cytoskeleton. Promotes the formation of filopodia. May activate CDC42, a member of the Ras-like family of Rho- and Rac proteins, by exchanging bound GDP for free GTP. Plays a role in regulating the actin cytoskeleton and cell shape. The sequence is that of FYVE, RhoGEF and PH domain-containing protein 3 (Fgd3) from Mus musculus (Mouse).